A 591-amino-acid polypeptide reads, in one-letter code: Proteasome-associated ATPase (591 aa).

A coiled-coil region spans residues 10–77; sequence VAAAEELHAL…LREEVDRLGQ (68 aa). 278–283 contributes to the ATP binding site; the sequence is GCGKTL. Residues 590–591 form a docks into pockets in the proteasome alpha-ring region; it reads YL.

It belongs to the AAA ATPase family. As to quaternary structure, homohexamer. Assembles into a hexameric ring structure that likely caps the 20S proteasome core. Can form a complex composed of two stacked hexameric rings in vitro. Probably interacts with the prokaryotic ubiquitin-like protein Pup through a hydrophobic interface; the expected interacting region of ARC lies in its N-terminal coiled-coil domain. There is likely one Pup binding site per ARC hexamer ring. Upon ATP-binding, the C-terminus of ARC probably interacts with the alpha-rings of the proteasome core, possibly by binding to the intersubunit pockets.

It participates in protein degradation; proteasomal Pup-dependent pathway. With respect to regulation, ATPase activity is inhibited by N-ethylmaleimide (NEM) but not by sodium azide. ATPase which is responsible for recognizing, binding, unfolding and translocation of pupylated proteins into the bacterial 20S proteasome core particle. May be essential for opening the gate of the 20S proteasome via an interaction with its C-terminus, thereby allowing substrate entry and access to the site of proteolysis. Thus, the C-termini of the proteasomal ATPase may function like a 'key in a lock' to induce gate opening and therefore regulate proteolysis. This chain is Proteasome-associated ATPase, found in Rhodococcus erythropolis (Arthrobacter picolinophilus).